Consider the following 238-residue polypeptide: Probable transcriptional regulatory protein SGO_0454 (238 aa).

The protein belongs to the TACO1 family. YeeN subfamily.

The protein resides in the cytoplasm. In Streptococcus gordonii (strain Challis / ATCC 35105 / BCRC 15272 / CH1 / DL1 / V288), this protein is Probable transcriptional regulatory protein SGO_0454.